The primary structure comprises 591 residues: Parathyroid hormone/parathyroid hormone-related peptide receptor (591 aa).

The N-terminal stretch at methionine 1 to valine 26 is a signal peptide. The Extracellular segment spans residues aspartate 27 to glycine 188. Intrachain disulfides connect cysteine 48-cysteine 117, cysteine 108-cysteine 148, and cysteine 131-cysteine 170. Positions lysine 67 to arginine 104 are disordered. The segment covering glutamate 81–aspartate 96 has biased composition (basic and acidic residues). N-linked (GlcNAc...) asparagine glycans are attached at residues asparagine 151, asparagine 161, asparagine 166, and asparagine 176. Residues methionine 189 to phenylalanine 212 traverse the membrane as a helical segment. Residues arginine 213–arginine 219 are Cytoplasmic-facing. The helical transmembrane segment at asparagine 220–valine 239 threads the bilayer. The Extracellular portion of the chain corresponds to lysine 240–arginine 282. Residues valine 283–leucine 306 form a helical membrane-spanning segment. Residues histidine 307–tyrosine 320 are Cytoplasmic-facing. The helical transmembrane segment at leucine 321 to valine 342 threads the bilayer. Residues arginine 343–tryptophan 361 are Extracellular-facing. A helical membrane pass occupies residues isoleucine 362–isoleucine 382. Residues arginine 383–serine 409 are Cytoplasmic-facing. Residues threonine 410–proline 428 traverse the membrane as a helical segment. The Extracellular segment spans residues tyrosine 429 to glutamine 440. Residues methionine 441–asparagine 463 traverse the membrane as a helical segment. Over glycine 464–methionine 591 the chain is Cytoplasmic. An Important for interaction with G proteins motif is present at residues tryptophan 474–tryptophan 477. The tract at residues leucine 516 to threonine 544 is disordered.

The protein belongs to the G-protein coupled receptor 2 family. In terms of assembly, homodimer in the absence of bound ligand. Peptide hormone binding leads to dissociation of the homodimer. N-glycosylated.

The protein resides in the cell membrane. Its function is as follows. G-protein-coupled receptor for parathyroid hormone (PTH) and for parathyroid hormone-related peptide (PTHLH). Ligand binding causes a conformation change that triggers signaling via guanine nucleotide-binding proteins (G proteins) and modulates the activity of downstream effectors, such as adenylate cyclase (cAMP). PTH1R is coupled to G(s) G alpha proteins and mediates activation of adenylate cyclase activity. PTHLH dissociates from PTH1R more rapidly than PTH; as consequence, the cAMP response induced by PTHLH decays faster than the response induced by PTH. The protein is Parathyroid hormone/parathyroid hormone-related peptide receptor (Pth1r) of Rattus norvegicus (Rat).